The chain runs to 789 residues: DEAD-box ATP-dependent RNA helicase 28 (789 aa).

Positions 1–152 are disordered; sequence MPSSFFFEDA…AEYKPEDATP (152 aa). Residues 13–66 adopt a coiled-coil conformation; sequence DELELIRNQEDSSEEDVKEGEAEEHEAGEDEDGEEEYEEEDDDEEEEDEKRKRD. The span at 23 to 60 shows a compositional bias: acidic residues; sequence DSSEEDVKEGEAEEHEAGEDEDGEEEYEEEDDDEEEED. Positions 83–99 are enriched in basic and acidic residues; it reads GEEHARRHTTSIDEKIS. The stretch at 110–135 forms a coiled coil; sequence SINEEEEEEEEEEDASDAETDKQEEY. Residues 112–127 are compositionally biased toward acidic residues; sequence NEEEEEEEEEEDASDA. The Q motif signature appears at 167–195; the sequence is DTFMELNLSRPLLRACETLGYKKPTPIQA. The Helicase ATP-binding domain occupies 198–372; the sequence is IPLALTGRDL…KLSLNKPLRL (175 aa). 211–218 contributes to the ATP binding site; it reads AITGSGKT. Residues 320–323 carry the DEAD box motif; it reads DEAD. In terms of domain architecture, Helicase C-terminal spans 402 to 546; sequence VLLSLCTRTF…SRVIPEQSIV (145 aa). 2 coiled-coil regions span residues 563-591 and 628-677; these read ISAE…HRDE and SADR…EDEE. Residues 611–789 form a disordered region; it reads AQAEKDSAGN…FKSKARYKRR (179 aa). The span at 628 to 637 shows a compositional bias: basic and acidic residues; the sequence is SADRAEDLKM. The segment covering 638–656 has biased composition (basic residues); sequence KEKRKREREKNLPRKKRRK. The segment covering 665–678 has biased composition (acidic residues); that stretch reads EDNEGEEEEEDEEG. Basic and acidic residues-rich tracts occupy residues 691–701, 718–734, and 743–761; these read KKQETDKKGLT, RAID…DKKQ, and PRGE…EKKQ. Positions 772–789 are enriched in basic residues; the sequence is PRTKSKNSFKSKARYKRR.

Belongs to the DEAD box helicase family. DDX27/DRS1 subfamily.

The enzyme catalyses ATP + H2O = ADP + phosphate + H(+). This chain is DEAD-box ATP-dependent RNA helicase 28 (RH28), found in Arabidopsis thaliana (Mouse-ear cress).